Consider the following 487-residue polypeptide: GPI mannosyltransferase 1 (487 aa).

3 helical membrane passes run 26 to 46, 87 to 107, and 121 to 141; these read PLPL…YGLW, ILAW…GPWA, and VLFA…LVMG. Residues 147 to 175 are disordered; it reads SAAKGKEKDTEKTKEGGKKGPSVTASTGM. Basic and acidic residues predominate over residues 150 to 164; sequence KGKEKDTEKTKEGGK. The next 7 membrane-spanning stretches (helical) occupy residues 205-225, 227-247, 289-309, 359-379, 393-413, 429-449, and 462-482; these read LLGV…ITLA, LLLG…PAIV, LLLA…MYRL, IESL…PLTL, FAFV…YLVL, MGLV…QQAY, and GLWM…GVIV.

This sequence belongs to the PIGM family.

The protein resides in the endoplasmic reticulum membrane. The protein operates within glycolipid biosynthesis; glycosylphosphatidylinositol-anchor biosynthesis. Mannosyltransferase involved in glycosylphosphatidylinositol-anchor biosynthesis. Transfers the first alpha-1,4-mannose to GlcN-acyl-PI during GPI precursor assembly. Required for cell wall integrity. In Neurospora crassa (strain ATCC 24698 / 74-OR23-1A / CBS 708.71 / DSM 1257 / FGSC 987), this protein is GPI mannosyltransferase 1 (gim-1).